A 40-amino-acid chain; its full sequence is MSLRKSKYEVLERLEVGLRIVSLALVVAKTLVELVDTTLI.

This is an uncharacterized protein from Myxococcus xanthus (strain DK1622).